The primary structure comprises 361 residues: tRNA/tmRNA (uracil-C(5))-methyltransferase (361 aa).

Residues glutamine 183, tyrosine 211, asparagine 216, glutamate 232, and aspartate 294 each contribute to the S-adenosyl-L-methionine site. Cysteine 319 serves as the catalytic Nucleophile. Glutamate 353 functions as the Proton acceptor in the catalytic mechanism.

The protein belongs to the class I-like SAM-binding methyltransferase superfamily. RNA M5U methyltransferase family. TrmA subfamily.

The enzyme catalyses uridine(54) in tRNA + S-adenosyl-L-methionine = 5-methyluridine(54) in tRNA + S-adenosyl-L-homocysteine + H(+). The catalysed reaction is uridine(341) in tmRNA + S-adenosyl-L-methionine = 5-methyluridine(341) in tmRNA + S-adenosyl-L-homocysteine + H(+). Functionally, dual-specificity methyltransferase that catalyzes the formation of 5-methyluridine at position 54 (m5U54) in all tRNAs, and that of position 341 (m5U341) in tmRNA (transfer-mRNA). This chain is tRNA/tmRNA (uracil-C(5))-methyltransferase, found in Acinetobacter baumannii (strain AYE).